Here is a 250-residue protein sequence, read N- to C-terminus: Ribosomal RNA small subunit methyltransferase J (250 aa).

S-adenosyl-L-methionine-binding positions include 96 to 97 (RD) and D168.

It belongs to the methyltransferase superfamily. RsmJ family.

It is found in the cytoplasm. The enzyme catalyses guanosine(1516) in 16S rRNA + S-adenosyl-L-methionine = N(2)-methylguanosine(1516) in 16S rRNA + S-adenosyl-L-homocysteine + H(+). Its function is as follows. Specifically methylates the guanosine in position 1516 of 16S rRNA. The sequence is that of Ribosomal RNA small subunit methyltransferase J from Neisseria meningitidis serogroup C (strain 053442).